The chain runs to 132 residues: Small ribosomal subunit protein uS8 (132 aa).

The protein belongs to the universal ribosomal protein uS8 family. In terms of assembly, part of the 30S ribosomal subunit. Contacts proteins S5 and S12.

Functionally, one of the primary rRNA binding proteins, it binds directly to 16S rRNA central domain where it helps coordinate assembly of the platform of the 30S subunit. This Bifidobacterium animalis subsp. lactis (strain AD011) protein is Small ribosomal subunit protein uS8.